We begin with the raw amino-acid sequence, 183 residues long: uncharacterized protein (183 aa).

The interval 1-23 (MGSSFVIDRSSSSPAPPRGPAPK) is disordered.

This is an uncharacterized protein from Saccharomyces cerevisiae (strain ATCC 204508 / S288c) (Baker's yeast).